The following is a 360-amino-acid chain: Phosphoserine aminotransferase (360 aa).

Arginine 41 is a binding site for L-glutamate. Pyridoxal 5'-phosphate contacts are provided by tryptophan 101, threonine 152, aspartate 172, and glutamine 195. Lysine 196 is subject to N6-(pyridoxal phosphate)lysine. Position 237-238 (237-238 (NT)) interacts with pyridoxal 5'-phosphate.

The protein belongs to the class-V pyridoxal-phosphate-dependent aminotransferase family. SerC subfamily. Homodimer. Pyridoxal 5'-phosphate serves as cofactor.

It is found in the cytoplasm. It carries out the reaction O-phospho-L-serine + 2-oxoglutarate = 3-phosphooxypyruvate + L-glutamate. The enzyme catalyses 4-(phosphooxy)-L-threonine + 2-oxoglutarate = (R)-3-hydroxy-2-oxo-4-phosphooxybutanoate + L-glutamate. It participates in amino-acid biosynthesis; L-serine biosynthesis; L-serine from 3-phospho-D-glycerate: step 2/3. The protein operates within cofactor biosynthesis; pyridoxine 5'-phosphate biosynthesis; pyridoxine 5'-phosphate from D-erythrose 4-phosphate: step 3/5. Catalyzes the reversible conversion of 3-phosphohydroxypyruvate to phosphoserine and of 3-hydroxy-2-oxo-4-phosphonooxybutanoate to phosphohydroxythreonine. This chain is Phosphoserine aminotransferase, found in Burkholderia vietnamiensis (strain G4 / LMG 22486) (Burkholderia cepacia (strain R1808)).